A 61-amino-acid polypeptide reads, in one-letter code: UPF0434 protein Pput_3813 (61 aa).

It belongs to the UPF0434 family.

This Pseudomonas putida (strain ATCC 700007 / DSM 6899 / JCM 31910 / BCRC 17059 / LMG 24140 / F1) protein is UPF0434 protein Pput_3813.